We begin with the raw amino-acid sequence, 79 residues long: Conotoxin ArMSGL-0123 (79 aa).

A signal peptide spans 1-20; that stretch reads MSRLGIMVLTLLLLVFIVTS. A propeptide spanning residues 21-44 is cleaved from the precursor; the sequence is HQDAGEKQATKRAAVNFRWRRSFT. 3 disulfides stabilise this stretch: Cys-52/Cys-64, Cys-56/Cys-73, and Cys-63/Cys-77. Leu-78 carries the leucine amide modification.

It belongs to the conotoxin O3 superfamily. Expressed by the venom duct.

Its subcellular location is the secreted. This Conus arenatus (Sand-dusted cone) protein is Conotoxin ArMSGL-0123.